Consider the following 418-residue polypeptide: NADH-quinone oxidoreductase subunit D (418 aa).

This sequence belongs to the complex I 49 kDa subunit family. As to quaternary structure, NDH-1 is composed of 14 different subunits. Subunits NuoB, C, D, E, F, and G constitute the peripheral sector of the complex.

The protein resides in the cell inner membrane. It carries out the reaction a quinone + NADH + 5 H(+)(in) = a quinol + NAD(+) + 4 H(+)(out). In terms of biological role, NDH-1 shuttles electrons from NADH, via FMN and iron-sulfur (Fe-S) centers, to quinones in the respiratory chain. The immediate electron acceptor for the enzyme in this species is believed to be ubiquinone. Couples the redox reaction to proton translocation (for every two electrons transferred, four hydrogen ions are translocated across the cytoplasmic membrane), and thus conserves the redox energy in a proton gradient. The protein is NADH-quinone oxidoreductase subunit D of Neisseria gonorrhoeae (strain ATCC 700825 / FA 1090).